The chain runs to 161 residues: Nucleotide-binding protein Mmwyl1_2033 (161 aa).

The protein belongs to the YajQ family.

Functionally, nucleotide-binding protein. The protein is Nucleotide-binding protein Mmwyl1_2033 of Marinomonas sp. (strain MWYL1).